The chain runs to 166 residues: Phospholipase A2 inhibitor clone 06/08 (166 aa).

Residues 1–19 (MRLILLSGLLLLGIFLANG) form the signal peptide. The C-type lectin domain maps to 46 to 161 (LRGAFLTVYK…CDDNLLVVCE (116 aa)). 2 N-linked (GlcNAc...) asparagine glycosylation sites follow: Asn-61 and Asn-122. 2 disulfides stabilise this stretch: Cys-83–Cys-160 and Cys-138–Cys-152.

Belongs to the alpha-type phospholipase A2 inhibitor family. As to quaternary structure, homotrimer; non-covalently linked. Expressed by the liver.

It is found in the secreted. This phospholipase A2 inhibitor binds directly phospholipase A2 in the presence or absence of calcium. This chain is Phospholipase A2 inhibitor clone 06/08, found in Bothrops neuwiedi (Neuwied's lancehead).